A 449-amino-acid polypeptide reads, in one-letter code: Probable glycine dehydrogenase (decarboxylating) subunit 1 (449 aa).

This sequence belongs to the GcvP family. N-terminal subunit subfamily. The glycine cleavage system is composed of four proteins: P, T, L and H. In this organism, the P 'protein' is a heterodimer of two subunits.

It catalyses the reaction N(6)-[(R)-lipoyl]-L-lysyl-[glycine-cleavage complex H protein] + glycine + H(+) = N(6)-[(R)-S(8)-aminomethyldihydrolipoyl]-L-lysyl-[glycine-cleavage complex H protein] + CO2. The glycine cleavage system catalyzes the degradation of glycine. The P protein binds the alpha-amino group of glycine through its pyridoxal phosphate cofactor; CO(2) is released and the remaining methylamine moiety is then transferred to the lipoamide cofactor of the H protein. This chain is Probable glycine dehydrogenase (decarboxylating) subunit 1, found in Pyrococcus horikoshii (strain ATCC 700860 / DSM 12428 / JCM 9974 / NBRC 100139 / OT-3).